We begin with the raw amino-acid sequence, 53 residues long: uncharacterized protein (53 aa).

A helical membrane pass occupies residues 28–45 (AIVFSLAVFGIVEAYYYW).

The protein resides in the host membrane. This is an uncharacterized protein from Acidianus convivator (ABV).